The sequence spans 467 residues: Dimethylamine methyltransferase MtbB1 (467 aa).

A non-standard amino acid (pyrrolysine) is located at residue O356.

It belongs to the dimethylamine methyltransferase family.

The catalysed reaction is Co(I)-[dimethylamine-specific corrinoid protein] + dimethylamine + H(+) = methyl-Co(III)-[dimethylamine-specific corrinoid protein] + methylamine. The protein operates within one-carbon metabolism; methanogenesis from dimethylamine. Functionally, catalyzes the transfer of a methyl group from dimethylamine to the corrinoid cofactor of MtbC. In Methanosarcina barkeri (strain Fusaro / DSM 804), this protein is Dimethylamine methyltransferase MtbB1 (mtbB1).